We begin with the raw amino-acid sequence, 327 residues long: Ornithine carbamoyltransferase 2, anabolic (327 aa).

Residues Arg109 and 136–139 (HPTQ) each bind carbamoyl phosphate. Residues Asn168, Asp232, and 236-237 (SM) contribute to the L-ornithine site. Residues 273–274 (CL) and Arg313 contribute to the carbamoyl phosphate site.

The protein belongs to the aspartate/ornithine carbamoyltransferase superfamily. OTCase family. As to quaternary structure, homotrimer.

Its subcellular location is the cytoplasm. The enzyme catalyses carbamoyl phosphate + L-ornithine = L-citrulline + phosphate + H(+). Its pathway is amino-acid biosynthesis; L-arginine biosynthesis; L-arginine from L-ornithine and carbamoyl phosphate: step 1/3. Its function is as follows. Plays an important role in the survival and pathogenicity of P.syringae. Phaseolotoxin is a virulence factor that inhibits the catalysis of the host OTCase. Phaseolotoxin-producing bacteria do not suffer autointoxication because they possess the anabolic OTCase ArgK which can function even in the presence of phaseolotoxin. Reversibly catalyzes the transfer of the carbamoyl group from carbamoyl phosphate (CP) to the N(epsilon) atom of ornithine (ORN) to produce L-citrulline, which is a substrate for argininosuccinate synthetase, the enzyme involved in the final step in arginine biosynthesis. The chain is Ornithine carbamoyltransferase 2, anabolic from Pseudomonas savastanoi pv. phaseolicola (Pseudomonas syringae pv. phaseolicola).